A 366-amino-acid chain; its full sequence is Growth hormone secretagogue receptor type 1 (366 aa).

Residues 1–40 (MWNATLSEEPGYNLTLPDLGWDAPADNDSLTDELLPLFPA) are Extracellular-facing. N-linked (GlcNAc...) asparagine glycans are attached at residues N3, N13, and N27. The helical transmembrane segment at 41-66 (PLLAGVTATCVALFVVGIAGNLLTML) threads the bilayer. Topologically, residues 67–72 (VVSRFR) are cytoplasmic. Residues 73–96 (ELRTTTNLYLSSMAFSDLLIFLCM) traverse the membrane as a helical segment. Topologically, residues 97–117 (PLDLVRLWQYRPWNFGDLLCK) are extracellular. C116 and C198 form a disulfide bridge. A helical membrane pass occupies residues 118-139 (LFQFVSESCTYATVLTITALSV). The Cytoplasmic portion of the chain corresponds to 140-162 (ERYFAICFPLRAKVVVTKGRVKL). A helical membrane pass occupies residues 163 to 183 (VILVIWAVAFCSAGPIFVLVG). Over 184-211 (VEHENGTDPRDTNECRATEFAVRSGLLT) the chain is Extracellular. A glycan (N-linked (GlcNAc...) asparagine) is linked at N188. Residues 212 to 235 (VMVWVSSVFFFLPVFCLTVLYSLI) traverse the membrane as a helical segment. Over 236-263 (GRKLWRRKRGEAAVGASLRDQNHKQTVK) the chain is Cytoplasmic. The chain crosses the membrane as a helical span at residues 264–285 (MLAVVVFAFILCWLPFHVGRYL). At 286–302 (FSKSFEPGSLEIAQISQ) the chain is on the extracellular side. A helical transmembrane segment spans residues 303–326 (YCNLVSFVLFYLSAAINPILYNIM). Over 327–366 (SKKYRVAVFKLLGFEPFSQRKLSTLKDESSRAWTETSINT) the chain is Cytoplasmic.

The protein belongs to the G-protein coupled receptor 1 family.

Its subcellular location is the cell membrane. Functionally, receptor for ghrelin, coupled to G-alpha-11 proteins. Stimulates growth hormone secretion. Also binds other growth hormone releasing peptides (GHRP) (e.g. Met-enkephalin and GHRP-6) as well as non-peptide, low molecular weight secretagogues (e.g. L-692,429, MK-0677, adenosine). This Mustela putorius furo (European domestic ferret) protein is Growth hormone secretagogue receptor type 1 (GHSR).